The following is a 362-amino-acid chain: 3-dehydroquinate synthase (362 aa).

NAD(+) is bound by residues 71 to 76 (DGEQYK), 105 to 109 (GVVGD), 129 to 130 (TT), Lys142, Lys151, and 169 to 172 (CLKT). Residues Glu184, His248, and His265 each coordinate Zn(2+).

It belongs to the sugar phosphate cyclases superfamily. Dehydroquinate synthase family. It depends on Co(2+) as a cofactor. Zn(2+) is required as a cofactor. The cofactor is NAD(+).

The protein localises to the cytoplasm. It catalyses the reaction 7-phospho-2-dehydro-3-deoxy-D-arabino-heptonate = 3-dehydroquinate + phosphate. It functions in the pathway metabolic intermediate biosynthesis; chorismate biosynthesis; chorismate from D-erythrose 4-phosphate and phosphoenolpyruvate: step 2/7. In terms of biological role, catalyzes the conversion of 3-deoxy-D-arabino-heptulosonate 7-phosphate (DAHP) to dehydroquinate (DHQ). This Yersinia pseudotuberculosis serotype O:1b (strain IP 31758) protein is 3-dehydroquinate synthase.